Consider the following 88-residue polypeptide: Small ribosomal subunit protein bS20 (88 aa).

Residues 1–27 form a disordered region; sequence MANIKSQIKRNKTNEKARLRNKAVKSS.

This sequence belongs to the bacterial ribosomal protein bS20 family.

In terms of biological role, binds directly to 16S ribosomal RNA. This is Small ribosomal subunit protein bS20 from Streptomyces griseus subsp. griseus (strain JCM 4626 / CBS 651.72 / NBRC 13350 / KCC S-0626 / ISP 5235).